The sequence spans 189 residues: MSRLWITGYRSYEIGTFGDKDPKILVMKYAIKQLVRQQLENGLEWVLTGGQLGVEQWTIEVVLALKKDWPMLKVAMMLPFEDFGSQWQPNSQSKLQVLKQGVDFVDSVSHATYQGPGQLQNYQAFMLNHTDAALLFYDPEFEGKAKYDYKIIQQHQRKTPYPLTLIDMDQLQDYATTYSEQQAENDFFE.

Belongs to the UPF0398 family.

This is UPF0398 protein LCK_00599 from Leuconostoc citreum (strain KM20).